The sequence spans 377 residues: Glutamate 5-kinase (377 aa).

An ATP-binding site is contributed by Lys18. Residues Ser59, Asp146, and Asn158 each coordinate substrate. Residues 178 to 179 and 222 to 228 each bind ATP; these read SD and TGGMATK. Residues 286-363 form the PUA domain; that stretch reads QGWVTVDAGA…DAIEAELGFT (78 aa).

The protein belongs to the glutamate 5-kinase family.

It localises to the cytoplasm. It catalyses the reaction L-glutamate + ATP = L-glutamyl 5-phosphate + ADP. It participates in amino-acid biosynthesis; L-proline biosynthesis; L-glutamate 5-semialdehyde from L-glutamate: step 1/2. Functionally, catalyzes the transfer of a phosphate group to glutamate to form L-glutamate 5-phosphate. This chain is Glutamate 5-kinase, found in Caulobacter vibrioides (strain ATCC 19089 / CIP 103742 / CB 15) (Caulobacter crescentus).